The sequence spans 176 residues: Endoribonuclease YbeY (176 aa).

3 residues coordinate Zn(2+): His-138, His-142, and His-148.

Belongs to the endoribonuclease YbeY family. Zn(2+) serves as cofactor.

It is found in the cytoplasm. In terms of biological role, single strand-specific metallo-endoribonuclease involved in late-stage 70S ribosome quality control and in maturation of the 3' terminus of the 16S rRNA. The protein is Endoribonuclease YbeY of Trichormus variabilis (strain ATCC 29413 / PCC 7937) (Anabaena variabilis).